The following is a 472-amino-acid chain: Argininosuccinate lyase (472 aa).

The protein belongs to the lyase 1 family. Argininosuccinate lyase subfamily.

Its subcellular location is the cytoplasm. It carries out the reaction 2-(N(omega)-L-arginino)succinate = fumarate + L-arginine. It participates in amino-acid biosynthesis; L-arginine biosynthesis; L-arginine from L-ornithine and carbamoyl phosphate: step 3/3. The sequence is that of Argininosuccinate lyase from Synechococcus sp. (strain CC9605).